A 121-amino-acid polypeptide reads, in one-letter code: MSFYESVFIIRQDVSLNDIDKIVDDFAKIIKDNNGTIIKKEYWGLRTLAYKIGNNKKGHYYFLGLDITGNVKEELERKMKLNENIIRFLTIQADSISSEPSPILKNQSTENTPVIDVTINN.

This sequence belongs to the bacterial ribosomal protein bS6 family.

In terms of biological role, binds together with bS18 to 16S ribosomal RNA. This is Small ribosomal subunit protein bS6 from Rickettsia conorii (strain ATCC VR-613 / Malish 7).